Consider the following 671-residue polypeptide: Synaptotagmin-like protein 4 (671 aa).

Positions 4–122 (LLDLSFLSEE…KATGDWFYDQ (119 aa)) constitute a RabBD domain. The FYVE-type zinc-finger motif lies at 63–105 (CARCQESLGRLSPKTNTCRGCNHLVCRDCRIQESNGTWRCKVC). A disordered region spans residues 199 to 243 (SESLDSFTADSDSTSRRDSLDKSGLFPEWKKMSAPKSQVEKETQP). Residues Ser201, Ser204, Ser217, Ser221, Ser274, and Ser289 each carry the phosphoserine modification. In terms of domain architecture, C2 1 spans 356–478 (VTGRIAFSLK…KLDKKLDHCL (123 aa)). Ser488 carries the phosphoserine modification. The region spanning 507–633 (PASKTPVGGD…ISNGEVVDWM (127 aa)) is the C2 2 domain.

As to quaternary structure, part of a ternary complex containing STX1A and RAB27A. Can bind both dominant negative and dominant active mutants of RAB27A. Binds STXBP1, RAB3A, RAB8A and RAB27B. Interacts with MYO5A.

The protein resides in the membrane. It is found in the cell membrane. The protein localises to the cytoplasmic vesicle. It localises to the secretory vesicle membrane. In terms of biological role, modulates exocytosis of dense-core granules and secretion of hormones in the pancreas and the pituitary. Interacts with vesicles containing negatively charged phospholipids in a Ca(2+)-independent manner. The protein is Synaptotagmin-like protein 4 (SYTL4) of Homo sapiens (Human).